We begin with the raw amino-acid sequence, 231 residues long: Large ribosomal subunit protein uL1 (231 aa).

The protein belongs to the universal ribosomal protein uL1 family. Part of the 50S ribosomal subunit.

In terms of biological role, binds directly to 23S rRNA. The L1 stalk is quite mobile in the ribosome, and is involved in E site tRNA release. Its function is as follows. Protein L1 is also a translational repressor protein, it controls the translation of the L11 operon by binding to its mRNA. This chain is Large ribosomal subunit protein uL1, found in Francisella philomiragia subsp. philomiragia (strain ATCC 25017 / CCUG 19701 / FSC 153 / O#319-036).